The chain runs to 620 residues: Probable serine/threonine-protein kinase RTK1 (620 aa).

Disordered stretches follow at residues 1-20, 29-130, 153-186, 210-237, and 252-271; these read MVKE…SLFR, AKIF…PVRT, KDAF…SNLS, QAST…KKKS, and HDNH…TKPK. The span at 7 to 18 shows a compositional bias: low complexity; the sequence is LHSSSSTSLSSL. Over residues 56–76 the composition is skewed to basic and acidic residues; the sequence is KNTDSDQEDQIKYNKPNDRRS. Phosphothreonine is present on threonine 58. Serine 60 carries the phosphoserine modification. Polar residues-rich tracts occupy residues 95 to 107, 165 to 186, and 210 to 222; these read VASS…SPTS, TAHS…SNLS, and QAST…LQHN. A Phosphoserine modification is found at serine 216. Residues 254–263 are compositionally biased toward basic residues; the sequence is NHHHHHHHNR. Positions 302 to 575 constitute a Protein kinase domain; that stretch reads GIPGRKLGEG…MNDVVKDDWL (274 aa). ATP contacts are provided by residues 308–316 and lysine 330; that span reads LGEGASGSV. Lysine 334 participates in a covalent cross-link: Glycyl lysine isopeptide (Lys-Gly) (interchain with G-Cter in ubiquitin). The active-site Proton acceptor is the aspartate 430.

The protein belongs to the protein kinase superfamily. Ser/Thr protein kinase family. Interacts with ribosome biogenesis factors ARC1, CKA2 and GUS1.

The catalysed reaction is L-seryl-[protein] + ATP = O-phospho-L-seryl-[protein] + ADP + H(+). It catalyses the reaction L-threonyl-[protein] + ATP = O-phospho-L-threonyl-[protein] + ADP + H(+). Functionally, probable serine/threonine-protein kinase that may be involved in ribosome biogenesis. The chain is Probable serine/threonine-protein kinase RTK1 (RTK1) from Saccharomyces cerevisiae (strain ATCC 204508 / S288c) (Baker's yeast).